The following is a 257-amino-acid chain: Imidazole glycerol phosphate synthase subunit HisF (257 aa).

Active-site residues include Asp-12 and Asp-131.

It belongs to the HisA/HisF family. Heterodimer of HisH and HisF.

It is found in the cytoplasm. It catalyses the reaction 5-[(5-phospho-1-deoxy-D-ribulos-1-ylimino)methylamino]-1-(5-phospho-beta-D-ribosyl)imidazole-4-carboxamide + L-glutamine = D-erythro-1-(imidazol-4-yl)glycerol 3-phosphate + 5-amino-1-(5-phospho-beta-D-ribosyl)imidazole-4-carboxamide + L-glutamate + H(+). It participates in amino-acid biosynthesis; L-histidine biosynthesis; L-histidine from 5-phospho-alpha-D-ribose 1-diphosphate: step 5/9. Its function is as follows. IGPS catalyzes the conversion of PRFAR and glutamine to IGP, AICAR and glutamate. The HisF subunit catalyzes the cyclization activity that produces IGP and AICAR from PRFAR using the ammonia provided by the HisH subunit. This Teredinibacter turnerae (strain ATCC 39867 / T7901) protein is Imidazole glycerol phosphate synthase subunit HisF.